The following is a 432-amino-acid chain: Pachytene checkpoint protein 2 homolog (432 aa).

Residue Met1 is modified to N-acetylmethionine. Residue 179–186 (GPPGTGKT) participates in ATP binding.

Belongs to the AAA ATPase family. PCH2 subfamily. Specifically interacts with the ligand binding domain of the thyroid receptor (TR). This interaction does not require the presence of thyroid hormone for its interaction. Interacts with proteasome subunit PSMA8; to participate in meiosis progression during spermatogenesis.

Plays a key role in chromosome recombination and chromosome structure development during meiosis. Required at early steps in meiotic recombination that leads to non-crossovers pathways. Also needed for efficient completion of homologous synapsis by influencing crossover distribution along the chromosomes affecting both crossovers and non-crossovers pathways. Also required for development of higher-order chromosome structures and is needed for synaptonemal-complex formation. In males, required for efficient synapsis of the sex chromosomes and for sex body formation. Promotes early steps of the DNA double-strand breaks (DSBs) repair process upstream of the assembly of RAD51 complexes. Required for depletion of HORMAD1 and HORMAD2 from synapsed chromosomes. Plays a role in mitotic spindle assembly checkpoint (SAC) activation. The chain is Pachytene checkpoint protein 2 homolog (Trip13) from Rattus norvegicus (Rat).